Consider the following 182-residue polypeptide: Peptide deformylase (182 aa).

Fe cation-binding residues include cysteine 110 and histidine 153. Glutamate 154 is a catalytic residue. Histidine 157 serves as a coordination point for Fe cation.

It belongs to the polypeptide deformylase family. Fe(2+) serves as cofactor.

It carries out the reaction N-terminal N-formyl-L-methionyl-[peptide] + H2O = N-terminal L-methionyl-[peptide] + formate. Removes the formyl group from the N-terminal Met of newly synthesized proteins. Requires at least a dipeptide for an efficient rate of reaction. N-terminal L-methionine is a prerequisite for activity but the enzyme has broad specificity at other positions. The chain is Peptide deformylase from Halalkalibacterium halodurans (strain ATCC BAA-125 / DSM 18197 / FERM 7344 / JCM 9153 / C-125) (Bacillus halodurans).